The primary structure comprises 416 residues: tRNA(Met) cytidine acetate ligase (416 aa).

ATP contacts are provided by residues 7–20, Gly-101, Asn-162, and 187–188; these read VVEY…HLHH and RI.

It belongs to the TmcAL family.

It is found in the cytoplasm. It catalyses the reaction cytidine(34) in elongator tRNA(Met) + acetate + ATP = N(4)-acetylcytidine(34) in elongator tRNA(Met) + AMP + diphosphate. Catalyzes the formation of N(4)-acetylcytidine (ac(4)C) at the wobble position of elongator tRNA(Met), using acetate and ATP as substrates. First activates an acetate ion to form acetyladenylate (Ac-AMP) and then transfers the acetyl group to tRNA to form ac(4)C34. This chain is tRNA(Met) cytidine acetate ligase, found in Halalkalibacterium halodurans (strain ATCC BAA-125 / DSM 18197 / FERM 7344 / JCM 9153 / C-125) (Bacillus halodurans).